Here is a 551-residue protein sequence, read N- to C-terminus: Endolytic murein transglycosylase (551 aa).

Residues 1 to 187 (MSEKSREEEK…PKKEKKSHVK (187 aa)) lie on the Cytoplasmic side of the membrane. Residues 38–180 (VRTPANEPSA…EGAKPAKPKK (143 aa)) form a disordered region. Composition is skewed to low complexity over residues 100-110 (PSSPAEESGSR) and 145-157 (QAGPETPTPATET). Positions 159–174 (DIIRDTSRRSRREGAK) are enriched in basic and acidic residues. Residues 188–208 (AFVISFLVFLALLSAGGYFGY) form a helical membrane-spanning segment. Residues 209–551 (QYVLDSLLPI…VAEHVNSKLN (343 aa)) lie on the Extracellular side of the membrane.

Belongs to the transglycosylase MltG family. In terms of assembly, interacts with RodZ. Interacts with MreC in the elongasome; interaction is strongly reduced when the 90 C-terminal residues of MreC are missing. Interacts with KhpB (also called EloR/Jag) via MltG's N-terminus, suggesting the N-terminus of MltG is cytoplasmic.

The protein localises to the cell membrane. It carries out the reaction a peptidoglycan chain = a peptidoglycan chain with N-acetyl-1,6-anhydromuramyl-[peptide] at the reducing end + a peptidoglycan chain with N-acetylglucosamine at the non-reducing end.. Its function is as follows. Functions as a peptidoglycan terminase that cleaves nascent peptidoglycan strands endolytically to terminate their elongation. Mutations in this gene suppress deletion of PBP2b (penA); truncation at residue 168, undefined changes between residue Ile-447 and Ala-505, and mutation of Ala-505 suppress the penA deletion. Probably part of the elongasome which synthesizes peripheral peptidoglycan. This chain is Endolytic murein transglycosylase, found in Streptococcus pneumoniae (strain ATCC BAA-255 / R6).